The sequence spans 127 residues: Large ribosomal subunit protein bL20 (127 aa).

This sequence belongs to the bacterial ribosomal protein bL20 family.

Functionally, binds directly to 23S ribosomal RNA and is necessary for the in vitro assembly process of the 50S ribosomal subunit. It is not involved in the protein synthesizing functions of that subunit. This Streptomyces coelicolor (strain ATCC BAA-471 / A3(2) / M145) protein is Large ribosomal subunit protein bL20 (rplT).